We begin with the raw amino-acid sequence, 471 residues long: MQLLDDDFLLDNDMAKTLYHDYAAQMPIIDFHCHLNPSEIYQNKNYTNITRIWLNEGTYGDHYKWRLMRANGVDEKYITGDGDDYLKFIEWAKTIENAYGNPLYEWTHLELRRFFHIDERLTAESAPRIWEKANQLLQTDDFKPRQLIKNSNVQVVCTTDDPASDLHYHQLLKPEEAANGFKTLPAMRPDQLMQIDRDGFGDYLKTLGKVAGVEIHDFATIVTALTQRFEFFNKMGGRLSDHSLLTYHFEEATPAELDAIVAKGINNAALSEHEINQYLTMLLEALMKLNTQFNWTMQFHINSDRDLNRPMFAKIGPDTGYDAVGTQPDIVNHISALYTKMQQTEDVPKSIFYSLNSNDWLELATMMGCFQGGTTQKLQLGAGWWFNDTAEGMTQQLQVFAQQSLLPHFVGMLTDSRSFLSYPRHEYFRRVLCSFYGRLVEQGRVPNDAAELGRVVQNIAYNNAHDYFDFF.

Belongs to the metallo-dependent hydrolases superfamily. Uronate isomerase family.

The catalysed reaction is D-glucuronate = D-fructuronate. It catalyses the reaction aldehydo-D-galacturonate = keto-D-tagaturonate. It participates in carbohydrate metabolism; pentose and glucuronate interconversion. This chain is Uronate isomerase, found in Latilactobacillus sakei subsp. sakei (strain 23K) (Lactobacillus sakei subsp. sakei).